A 369-amino-acid chain; its full sequence is Small ribosomal subunit biogenesis GTPase RsgA (369 aa).

A CP-type G domain is found at 88-246 (RTVLERPPVA…LADTPGFNQP (159 aa)). Residues 137-140 (NKQD) and 188-196 (GPSGVGKSS) contribute to the GTP site. Cys271, Cys276, His278, and Cys284 together coordinate Zn(2+). The tract at residues 307–369 (QNPENSRETD…DLDNLQEDWE (63 aa)) is disordered. The span at 359–369 (TDLDNLQEDWE) shows a compositional bias: acidic residues.

The protein belongs to the TRAFAC class YlqF/YawG GTPase family. RsgA subfamily. In terms of assembly, monomer. Associates with 30S ribosomal subunit, binds 16S rRNA. It depends on Zn(2+) as a cofactor.

The protein resides in the cytoplasm. Functionally, one of several proteins that assist in the late maturation steps of the functional core of the 30S ribosomal subunit. Helps release RbfA from mature subunits. May play a role in the assembly of ribosomal proteins into the subunit. Circularly permuted GTPase that catalyzes slow GTP hydrolysis, GTPase activity is stimulated by the 30S ribosomal subunit. In Synechocystis sp. (strain ATCC 27184 / PCC 6803 / Kazusa), this protein is Small ribosomal subunit biogenesis GTPase RsgA.